The primary structure comprises 359 residues: Fructose-bisphosphate aldolase (359 aa).

S50 is a D-glyceraldehyde 3-phosphate binding site. Catalysis depends on D83, which acts as the Proton donor. Zn(2+) is bound by residues H84, D105, E142, and H198. G199 is a dihydroxyacetone phosphate binding site. Residue H232 coordinates Zn(2+). Dihydroxyacetone phosphate is bound by residues 233 to 235 (GSS) and 275 to 278 (NIDT).

It depends on Zn(2+) as a cofactor.

The catalysed reaction is beta-D-fructose 1,6-bisphosphate = D-glyceraldehyde 3-phosphate + dihydroxyacetone phosphate. Its pathway is carbohydrate degradation; glycolysis; D-glyceraldehyde 3-phosphate and glycerone phosphate from D-glucose: step 4/4. In terms of biological role, catalyzes the aldol condensation of dihydroxyacetone phosphate (DHAP or glycerone-phosphate) with glyceraldehyde 3-phosphate (G3P) to form fructose 1,6-bisphosphate (FBP) in gluconeogenesis and the reverse reaction in glycolysis. This is Fructose-bisphosphate aldolase from Nostoc sp. (strain PCC 7120 / SAG 25.82 / UTEX 2576).